Here is a 390-residue protein sequence, read N- to C-terminus: Transaldolase (390 aa).

Catalysis depends on lysine 135, which acts as the Schiff-base intermediate with substrate. EF-hand domains are found at residues 329–364 and 365–388; these read AFCH…FDAL and DHDH…LALT. The Ca(2+) site is built by aspartate 342, aspartate 344, aspartate 346, cysteine 348, glutamate 353, aspartate 365, aspartate 367, aspartate 369, arginine 371, and aspartate 376.

It belongs to the transaldolase family. Type 1 subfamily.

The protein localises to the cytoplasm. The enzyme catalyses D-sedoheptulose 7-phosphate + D-glyceraldehyde 3-phosphate = D-erythrose 4-phosphate + beta-D-fructose 6-phosphate. It functions in the pathway carbohydrate degradation; pentose phosphate pathway; D-glyceraldehyde 3-phosphate and beta-D-fructose 6-phosphate from D-ribose 5-phosphate and D-xylulose 5-phosphate (non-oxidative stage): step 2/3. Its function is as follows. Transaldolase is important for the balance of metabolites in the pentose-phosphate pathway. The protein is Transaldolase of Prochlorococcus marinus (strain MIT 9313).